The primary structure comprises 413 residues: Synaptosomal-associated protein 47 (413 aa).

The t-SNARE coiled-coil homology 1 domain occupies 109 to 171 (AANIPSHVTR…DVADRLLTEL (63 aa)). Positions 321-342 (RHAASRPKGCTPHRELPTGGQE) are disordered. In terms of domain architecture, t-SNARE coiled-coil homology 2 spans 350-412 (KNLPLFSEGE…DKQNRRMRKL (63 aa)).

Belongs to the SVAP1 family. In terms of assembly, associates with the BLOC-1 complex. Interacts with BLOC1S6. Forms a complex containing SNAP47, VAMP2 and STX1A. In terms of tissue distribution, ubiquitously expressed with the most abundant expression in the brain. In brain, most highly expressed in the glomerular layer of the olfactory bulb, the cortex, striatum, hippocampus, and colliculi (at protein level).

The protein resides in the endomembrane system. It localises to the cytoplasm. The protein localises to the perinuclear region. In terms of biological role, may play a role in intracellular membrane fusion. The protein is Synaptosomal-associated protein 47 (Snap47) of Mus musculus (Mouse).